The sequence spans 176 residues: Peroxynitrite isomerase 1 (176 aa).

Residues 1 to 23 form a disordered region; the sequence is MDENSTLSPAHSDAAASSSANTP. The span at 8–20 shows a compositional bias: low complexity; the sequence is SPAHSDAAASSSA. Residues 37–43 carry the GXWXGXG motif; the sequence is GLWRGEG. His168 is a binding site for heme b.

Belongs to the nitrobindin family. In terms of assembly, homodimer. Requires heme b as cofactor.

It catalyses the reaction peroxynitrite = nitrate. Its pathway is nitrogen metabolism. Functionally, heme-binding protein able to scavenge peroxynitrite and to protect free L-tyrosine against peroxynitrite-mediated nitration, by acting as a peroxynitrite isomerase that converts peroxynitrite to nitrate. Therefore, this protein likely plays a role in peroxynitrite sensing and in the detoxification of reactive nitrogen and oxygen species (RNS and ROS, respectively). Is able to bind nitric oxide (NO) in vitro, but may act as a sensor of peroxynitrite levels in vivo. The polypeptide is Peroxynitrite isomerase 1 (Rhodococcus jostii (strain RHA1)).